We begin with the raw amino-acid sequence, 154 residues long: MNKKRDKGQSHSTRPARAGPPRWLKLDMSPSDIELLVVELAKKGYTPSMIGIILRDQYGVPLVKQVTGKKLVQILEKHGIKLPVPEDLLFLMRKAVNLRRHLEEHPKDFHAKKGLLDLESKIHRLVKYYKRIGRLPPDWKYTPEQAKLIVSAYL.

The segment at 1–23 (MNKKRDKGQSHSTRPARAGPPRW) is disordered.

This sequence belongs to the universal ribosomal protein uS15 family. Part of the 30S ribosomal subunit.

This Staphylothermus marinus (strain ATCC 43588 / DSM 3639 / JCM 9404 / F1) protein is Small ribosomal subunit protein uS15.